An 89-amino-acid polypeptide reads, in one-letter code: HssA/B-like protein DDB_G0295685 (89 aa).

It belongs to the hssA/B family.

In Dictyostelium discoideum (Social amoeba), this protein is HssA/B-like protein DDB_G0295685.